The sequence spans 294 residues: Nucleoside-specific channel-forming protein Tsx (294 aa).

The signal sequence occupies residues 1–22 (MKKTLLAASAVVALSASFTAGA).

This sequence belongs to the nucleoside-specific channel-forming outer membrane porin (Tsx) (TC 1.B.10) family.

It is found in the cell outer membrane. Functionally, functions as a substrate-specific channel for nucleosides and deoxynucleosides. Also functions in albicidin uptake and as receptor for colicin K. Also is a receptor for several Tsx-specific bacteriophages. In Klebsiella aerogenes (strain ATCC 13048 / DSM 30053 / CCUG 1429 / JCM 1235 / KCTC 2190 / NBRC 13534 / NCIMB 10102 / NCTC 10006 / CDC 819-56) (Enterobacter aerogenes), this protein is Nucleoside-specific channel-forming protein Tsx.